The primary structure comprises 239 residues: Flagellin B3 (239 aa).

A propeptide spanning residues 1–11 (MLKNFMKNKKG) is cleaved from the precursor. Asn115 and Asn128 each carry an N-linked (GlcNAc...) asparagine glycan.

This sequence belongs to the archaeal flagellin family. N-linked glycans consist of the 779 Da trisaccharide beta-ManNAc(Thr)-(1-4)-beta-GlcNAc3NAcA-(1-3)-beta-GlcNAc.

The protein localises to the archaeal flagellum. Its function is as follows. Flagellin is the subunit protein which polymerizes to form the filaments of archaeal flagella. The protein is Flagellin B3 (flaB3) of Methanococcus voltae.